The following is a 224-amino-acid chain: MQKTSILIVALVALFAITEALPSLPTTGPIRVRRQVLGGSLTSNPAGGADARLDLTKGIGNPNHNVVGQVFAAGNTQSGPVTTGGTLAYNNAGHGASLTKTHTPGVKDVFQQEAHANLFNNGRHNLDAKVFASQNKLANGFEFQRNGAGLDYSHINGHGASLTHSNFPGIGQQLGLDGRANLWSSPNRATTLDLTGSASKWTSGPFANQKPNFGAGLGLSHHFG.

The first 20 residues, 1–20 (MQKTSILIVALVALFAITEA), serve as a signal peptide directing secretion. Residues 21 to 34 (LPSLPTTGPIRVRR) constitute a propeptide that is removed on maturation.

The protein belongs to the attacin/sarcotoxin-2 family. Hemolymph (at protein level).

The protein resides in the secreted. Hemolymph antibacterial protein. This chain is Attacin-A (AttA), found in Drosophila melanogaster (Fruit fly).